A 37-amino-acid chain; its full sequence is MKVRPSVKPICEKCKIIRRKGRIMVICENPKHKQAQG.

The protein belongs to the bacterial ribosomal protein bL36 family.

The polypeptide is Large ribosomal subunit protein bL36 (Pelotomaculum thermopropionicum (strain DSM 13744 / JCM 10971 / SI)).